The primary structure comprises 318 residues: Homoserine kinase (318 aa).

Proline 97–cysteine 107 is an ATP binding site.

This sequence belongs to the GHMP kinase family. Homoserine kinase subfamily.

The protein localises to the cytoplasm. It catalyses the reaction L-homoserine + ATP = O-phospho-L-homoserine + ADP + H(+). Its pathway is amino-acid biosynthesis; L-threonine biosynthesis; L-threonine from L-aspartate: step 4/5. Its function is as follows. Catalyzes the ATP-dependent phosphorylation of L-homoserine to L-homoserine phosphate. The chain is Homoserine kinase from Vibrio atlanticus (strain LGP32) (Vibrio splendidus (strain Mel32)).